The sequence spans 261 residues: Cytochrome c oxidase subunit 3 (261 aa).

At 1-15 the chain is on the mitochondrial matrix side; it reads MVHQSHAYHMLKPSP. A helical membrane pass occupies residues 16–34; that stretch reads WPLTGALSALLMTSGLAMW. The Mitochondrial intermembrane portion of the chain corresponds to 35–40; that stretch reads FHFHST. Residues 41–66 form a helical membrane-spanning segment; the sequence is TLLLTGMLTNALTMYQWWRDVVREST. At 67 to 72 the chain is on the mitochondrial matrix side; that stretch reads YQGHHT. The chain crosses the membrane as a helical span at residues 73–105; sequence LPVQKGLRYGMILFITSEVFFFAGFFWAFYHSS. Residues 106–128 are Mitochondrial intermembrane-facing; it reads LAPTPQLGGHWPPTGITPLNPLE. Residues 129-152 traverse the membrane as a helical segment; that stretch reads VPLLNTAVLLASGVSITWAHHSLM. Residues 153 to 155 are Mitochondrial matrix-facing; the sequence is ENN. The helical transmembrane segment at 156-183 threads the bilayer; the sequence is RTQMIQALLITILLGIYFTLLQASEYIE. Topologically, residues 184–190 are mitochondrial intermembrane; the sequence is APFTISD. A helical transmembrane segment spans residues 191–223; sequence GIYGSTFFMTTGFHGLHVIIGSTFLTVCLSCQL. Over 224 to 232 the chain is Mitochondrial matrix; sequence LFHFTSKHH. Residues 233-256 traverse the membrane as a helical segment; that stretch reads FGFEAAAWYWHFVDVVWLFLYVSI. Topologically, residues 257-261 are mitochondrial intermembrane; sequence YWWGS.

It belongs to the cytochrome c oxidase subunit 3 family. Component of the cytochrome c oxidase (complex IV, CIV), a multisubunit enzyme composed of 14 subunits. The complex is composed of a catalytic core of 3 subunits MT-CO1, MT-CO2 and MT-CO3, encoded in the mitochondrial DNA, and 11 supernumerary subunits COX4I, COX5A, COX5B, COX6A, COX6B, COX6C, COX7A, COX7B, COX7C, COX8 and NDUFA4, which are encoded in the nuclear genome. The complex exists as a monomer or a dimer and forms supercomplexes (SCs) in the inner mitochondrial membrane with NADH-ubiquinone oxidoreductase (complex I, CI) and ubiquinol-cytochrome c oxidoreductase (cytochrome b-c1 complex, complex III, CIII), resulting in different assemblies (supercomplex SCI(1)III(2)IV(1) and megacomplex MCI(2)III(2)IV(2)).

The protein localises to the mitochondrion inner membrane. It catalyses the reaction 4 Fe(II)-[cytochrome c] + O2 + 8 H(+)(in) = 4 Fe(III)-[cytochrome c] + 2 H2O + 4 H(+)(out). Functionally, component of the cytochrome c oxidase, the last enzyme in the mitochondrial electron transport chain which drives oxidative phosphorylation. The respiratory chain contains 3 multisubunit complexes succinate dehydrogenase (complex II, CII), ubiquinol-cytochrome c oxidoreductase (cytochrome b-c1 complex, complex III, CIII) and cytochrome c oxidase (complex IV, CIV), that cooperate to transfer electrons derived from NADH and succinate to molecular oxygen, creating an electrochemical gradient over the inner membrane that drives transmembrane transport and the ATP synthase. Cytochrome c oxidase is the component of the respiratory chain that catalyzes the reduction of oxygen to water. Electrons originating from reduced cytochrome c in the intermembrane space (IMS) are transferred via the dinuclear copper A center (CU(A)) of subunit 2 and heme A of subunit 1 to the active site in subunit 1, a binuclear center (BNC) formed by heme A3 and copper B (CU(B)). The BNC reduces molecular oxygen to 2 water molecules using 4 electrons from cytochrome c in the IMS and 4 protons from the mitochondrial matrix. The polypeptide is Cytochrome c oxidase subunit 3 (MT-CO3) (Pongo pygmaeus (Bornean orangutan)).